The sequence spans 182 residues: ATP-dependent protease subunit HslV (182 aa).

Thr-2 is an active-site residue. Gly-157, Cys-160, and Thr-163 together coordinate Na(+).

Belongs to the peptidase T1B family. HslV subfamily. In terms of assembly, a double ring-shaped homohexamer of HslV is capped on each side by a ring-shaped HslU homohexamer. The assembly of the HslU/HslV complex is dependent on binding of ATP.

It localises to the cytoplasm. The catalysed reaction is ATP-dependent cleavage of peptide bonds with broad specificity.. Its activity is regulated as follows. Allosterically activated by HslU binding. Its function is as follows. Protease subunit of a proteasome-like degradation complex believed to be a general protein degrading machinery. The chain is ATP-dependent protease subunit HslV from Vibrio atlanticus (strain LGP32) (Vibrio splendidus (strain Mel32)).